The primary structure comprises 232 residues: Phosphatidylserine decarboxylase proenzyme (232 aa).

Residue serine 190 is the Schiff-base intermediate with substrate; via pyruvic acid of the active site. The residue at position 190 (serine 190) is a Pyruvic acid (Ser); by autocatalysis.

It belongs to the phosphatidylserine decarboxylase family. PSD-A subfamily. As to quaternary structure, heterodimer of a large membrane-associated beta subunit and a small pyruvoyl-containing alpha subunit. Pyruvate serves as cofactor. Is synthesized initially as an inactive proenzyme. Formation of the active enzyme involves a self-maturation process in which the active site pyruvoyl group is generated from an internal serine residue via an autocatalytic post-translational modification. Two non-identical subunits are generated from the proenzyme in this reaction, and the pyruvate is formed at the N-terminus of the alpha chain, which is derived from the carboxyl end of the proenzyme. The post-translation cleavage follows an unusual pathway, termed non-hydrolytic serinolysis, in which the side chain hydroxyl group of the serine supplies its oxygen atom to form the C-terminus of the beta chain, while the remainder of the serine residue undergoes an oxidative deamination to produce ammonia and the pyruvoyl prosthetic group on the alpha chain.

The protein resides in the cell membrane. It carries out the reaction a 1,2-diacyl-sn-glycero-3-phospho-L-serine + H(+) = a 1,2-diacyl-sn-glycero-3-phosphoethanolamine + CO2. Its pathway is phospholipid metabolism; phosphatidylethanolamine biosynthesis; phosphatidylethanolamine from CDP-diacylglycerol: step 2/2. In terms of biological role, catalyzes the formation of phosphatidylethanolamine (PtdEtn) from phosphatidylserine (PtdSer). The chain is Phosphatidylserine decarboxylase proenzyme from Rhizobium etli (strain CIAT 652).